The following is a 215-amino-acid chain: Probable transaldolase (215 aa).

Lys-83 functions as the Schiff-base intermediate with substrate in the catalytic mechanism.

Belongs to the transaldolase family. Type 3B subfamily.

The protein resides in the cytoplasm. It carries out the reaction D-sedoheptulose 7-phosphate + D-glyceraldehyde 3-phosphate = D-erythrose 4-phosphate + beta-D-fructose 6-phosphate. It participates in carbohydrate degradation; pentose phosphate pathway; D-glyceraldehyde 3-phosphate and beta-D-fructose 6-phosphate from D-ribose 5-phosphate and D-xylulose 5-phosphate (non-oxidative stage): step 2/3. Functionally, transaldolase is important for the balance of metabolites in the pentose-phosphate pathway. The polypeptide is Probable transaldolase (Anaeromyxobacter sp. (strain Fw109-5)).